A 121-amino-acid chain; its full sequence is Fluoride-specific ion channel FluC 1 (121 aa).

4 helical membrane-spanning segments follow: residues 3–23 (YLYI…LSML), 29–49 (IPLG…SIGA), 67–87 (TGLL…VTLF), and 92–112 (FILF…SCYL). The Na(+) site is built by glycine 71 and threonine 74.

This sequence belongs to the fluoride channel Fluc/FEX (TC 1.A.43) family.

The protein resides in the cell membrane. The catalysed reaction is fluoride(in) = fluoride(out). Na(+) is not transported, but it plays an essential structural role and its presence is essential for fluoride channel function. Its function is as follows. Fluoride-specific ion channel. Important for reducing fluoride concentration in the cell, thus reducing its toxicity. This is Fluoride-specific ion channel FluC 1 from Staphylococcus epidermidis (strain ATCC 35984 / DSM 28319 / BCRC 17069 / CCUG 31568 / BM 3577 / RP62A).